We begin with the raw amino-acid sequence, 145 residues long: Maximins 3/H3 type 2 (145 aa).

The N-terminal stretch at 1–18 is a signal peptide; sequence MNFKYIVAVSFLIASAYA. 2 consecutive propeptides follow at residues 19 to 43 and 74 to 124; these read RSVQ…LREI and RTAE…KEKR. Position 144 is an isoleucine amide (I144).

Belongs to the bombinin family. In terms of tissue distribution, expressed by the skin glands.

It is found in the secreted. Its function is as follows. Maximin-3 shows antibacterial activity against both Gram-positive and Gram-negative bacteria. It also shows antimicrobial activity against the fungus C.albicans, but not against A.flavus nor P.uticale. It has little hemolytic activity. It possess a significant cytotoxicity against tumor cell lines. It possess a significant anti-HIV activity. It shows high spermicidal activity. Maximin-H3 shows antibacterial activity against both Gram-positive and Gram-negative bacteria. It also shows antimicrobial activity against the fungus C.albicans. Shows strong hemolytic activity. The protein is Maximins 3/H3 type 2 of Bombina maxima (Giant fire-bellied toad).